A 305-amino-acid chain; its full sequence is Ribosomal RNA small subunit methyltransferase H (305 aa).

S-adenosyl-L-methionine-binding positions include 30 to 32, D49, F74, D96, and Q103; that span reads GGH.

Belongs to the methyltransferase superfamily. RsmH family.

It localises to the cytoplasm. The catalysed reaction is cytidine(1402) in 16S rRNA + S-adenosyl-L-methionine = N(4)-methylcytidine(1402) in 16S rRNA + S-adenosyl-L-homocysteine + H(+). In terms of biological role, specifically methylates the N4 position of cytidine in position 1402 (C1402) of 16S rRNA. This chain is Ribosomal RNA small subunit methyltransferase H, found in Francisella tularensis subsp. mediasiatica (strain FSC147).